A 181-amino-acid polypeptide reads, in one-letter code: Translationally-controlled tumor protein homolog (181 aa).

One can recognise a TCTP domain in the interval 1 to 181 (MLIFKDAFTD…VKEALIEEKQ (181 aa)).

The protein belongs to the TCTP family.

The protein resides in the cytoplasm. In terms of biological role, involved in calcium binding and microtubule stabilization. In Brugia malayi (Filarial nematode worm), this protein is Translationally-controlled tumor protein homolog.